The following is a 685-amino-acid chain: Sodium-dependent phosphate transporter 1-B (685 aa).

The next 6 membrane-spanning stretches (helical) occupy residues 21–41 (IMAP…VLAF), 66–86 (ACIL…AKVS), 106–126 (LMAG…AASF), 162–182 (IVLS…LLFF), 207–227 (ACTI…LLGF), and 234–254 (GIIL…WFFV). The tract at residues 489 to 511 (EGCIEDVVTDRKSSSSSLEERHD) is disordered. The segment covering 496 to 511 (VTDRKSSSSSLEERHD) has biased composition (basic and acidic residues). Helical transmembrane passes span 517-537 (VSLL…FAHG), 565-585 (ATPI…LWVW), 606-626 (FSIE…GLPI), and 656-676 (IFLA…GIMA).

This sequence belongs to the inorganic phosphate transporter (PiT) (TC 2.A.20) family.

The protein localises to the membrane. In terms of biological role, sodium-phosphate symporter which plays a fundamental housekeeping role in phosphate transport. This chain is Sodium-dependent phosphate transporter 1-B (slc20a1-b), found in Xenopus laevis (African clawed frog).